Here is a 505-residue protein sequence, read N- to C-terminus: ATP synthase subunit alpha (505 aa).

172–179 (GDRQIGKT) is a binding site for ATP.

It belongs to the ATPase alpha/beta chains family. F-type ATPases have 2 components, CF(1) - the catalytic core - and CF(0) - the membrane proton channel. CF(1) has five subunits: alpha(3), beta(3), gamma(1), delta(1), epsilon(1). CF(0) has three main subunits: a(1), b(2) and c(9-12). The alpha and beta chains form an alternating ring which encloses part of the gamma chain. CF(1) is attached to CF(0) by a central stalk formed by the gamma and epsilon chains, while a peripheral stalk is formed by the delta and b chains.

It is found in the cell inner membrane. The enzyme catalyses ATP + H2O + 4 H(+)(in) = ADP + phosphate + 5 H(+)(out). Its function is as follows. Produces ATP from ADP in the presence of a proton gradient across the membrane. The alpha chain is a regulatory subunit. The polypeptide is ATP synthase subunit alpha (Syntrophobacter fumaroxidans (strain DSM 10017 / MPOB)).